The following is a 1066-amino-acid chain: Isoleucine--tRNA ligase (1066 aa).

The short motif at 49-59 (PYVSGAIHLGT) is the 'HIGH' region element. The short motif at 625-629 (KMSKS) is the 'KMSKS' region element. Residue lysine 628 participates in ATP binding.

It belongs to the class-I aminoacyl-tRNA synthetase family. IleS type 2 subfamily. As to quaternary structure, monomer. It depends on Zn(2+) as a cofactor.

The protein localises to the cytoplasm. It carries out the reaction tRNA(Ile) + L-isoleucine + ATP = L-isoleucyl-tRNA(Ile) + AMP + diphosphate. Functionally, catalyzes the attachment of isoleucine to tRNA(Ile). As IleRS can inadvertently accommodate and process structurally similar amino acids such as valine, to avoid such errors it has two additional distinct tRNA(Ile)-dependent editing activities. One activity is designated as 'pretransfer' editing and involves the hydrolysis of activated Val-AMP. The other activity is designated 'posttransfer' editing and involves deacylation of mischarged Val-tRNA(Ile). The protein is Isoleucine--tRNA ligase of Pyrococcus horikoshii (strain ATCC 700860 / DSM 12428 / JCM 9974 / NBRC 100139 / OT-3).